The sequence spans 397 residues: MKVLVVNAGSSSIKYQVVDMTDESVLAVGLVDRVGIPGTTLDHSPLGKDKVTIKKDLPDHTAGMELVLQVLVNEEYGCIKSMDEIGAVGHRVVHGGEGFAESVVIDDEVKRVIKECFEIAPLHNPPNMMGIEACQRLMPNVKHVAVFDTAFHQTMGPANFMYALPYDVYEKFRVRRYGFHGTSHFYVAHRAAEMLGKPYEECKIITLHLGNGASMAAIKDGKVIDTSMGFTPLEGLVMGTRSGDIDPAIVFFLMDKLGMNSSEANNYFNKKSGMLGLSGVSNDLRDILEAAGSGNERAKIALDVYYNKVKGYIGNYIAKLNGVDCLVFTAGVGENAIDIRENVCANLDYLGIKMDVEKNKVRGKEVDVATADSKVRIFLIPTNEELVIARDTFNLAK.

Mg(2+) is bound at residue Asn-7. Residue Lys-14 coordinates ATP. Arg-91 provides a ligand contact to substrate. The Proton donor/acceptor role is filled by Asp-148. ATP-binding positions include 208–212 (HLGNG), 283–285 (DLR), and 331–335 (GVGEN). Position 384 (Glu-384) interacts with Mg(2+).

It belongs to the acetokinase family. Homodimer. The cofactor is Mg(2+). It depends on Mn(2+) as a cofactor.

Its subcellular location is the cytoplasm. It carries out the reaction acetate + ATP = acetyl phosphate + ADP. Its pathway is metabolic intermediate biosynthesis; acetyl-CoA biosynthesis; acetyl-CoA from acetate: step 1/2. Catalyzes the formation of acetyl phosphate from acetate and ATP. Can also catalyze the reverse reaction. This Syntrophomonas wolfei subsp. wolfei (strain DSM 2245B / Goettingen) protein is Acetate kinase.